Here is a 375-residue protein sequence, read N- to C-terminus: Coproporphyrin III ferrochelatase (375 aa).

Residues Ser59 and Tyr128 each coordinate Fe-coproporphyrin III. Residues His191 and Glu286 each contribute to the Fe(2+) site.

It belongs to the ferrochelatase family.

The protein resides in the cytoplasm. The enzyme catalyses Fe-coproporphyrin III + 2 H(+) = coproporphyrin III + Fe(2+). The protein operates within porphyrin-containing compound metabolism; protoheme biosynthesis. In terms of biological role, involved in coproporphyrin-dependent heme b biosynthesis. Catalyzes the insertion of ferrous iron into coproporphyrin III to form Fe-coproporphyrin III. The chain is Coproporphyrin III ferrochelatase from Streptomyces griseus subsp. griseus (strain JCM 4626 / CBS 651.72 / NBRC 13350 / KCC S-0626 / ISP 5235).